Reading from the N-terminus, the 932-residue chain is UPF0182 protein Syncc9902_1151 (932 aa).

Transmembrane regions (helical) follow at residues 4–24 (FLWILLPPVLVVVARMHVEWV), 40–60 (MLQLLFAGAGSIPVFLAVLWL), 85–105 (VLMVSGLAFLACSVVLSDLAI), 124–144 (MASEWKALLPIQLAIAGVSLC), 151–171 (WVAVAMGFALVLVVSRAWGVW), 201–221 (IQLGLELLVLSGTFTTAHAVW), 243–263 (YRWLSIGVGTNLLGVAGLVWL), 293–313 (LLAFVLLVLGVSCIVRGIGHL), and 315–335 (RLLLLCVAAIVIIESTLTPLT).

Belongs to the UPF0182 family.

The protein localises to the cell membrane. This Synechococcus sp. (strain CC9902) protein is UPF0182 protein Syncc9902_1151.